The chain runs to 61 residues: Small ribosomal subunit protein uS14B (61 aa).

4 residues coordinate Zn(2+): C24, C27, C40, and C43.

Belongs to the universal ribosomal protein uS14 family. Zinc-binding uS14 subfamily. As to quaternary structure, part of the 30S ribosomal subunit. Contacts proteins S3 and S10. Requires Zn(2+) as cofactor.

In terms of biological role, binds 16S rRNA, required for the assembly of 30S particles and may also be responsible for determining the conformation of the 16S rRNA at the A site. The polypeptide is Small ribosomal subunit protein uS14B (Bacillus licheniformis (strain ATCC 14580 / DSM 13 / JCM 2505 / CCUG 7422 / NBRC 12200 / NCIMB 9375 / NCTC 10341 / NRRL NRS-1264 / Gibson 46)).